Reading from the N-terminus, the 524-residue chain is Translation initiation factor eIF2B subunit delta (524 aa).

Residues 1 to 155 form a disordered region; sequence MAAVAVAVRE…EHTPADDPTL (155 aa). A2 carries the N-acetylalanine modification. Composition is skewed to basic and acidic residues over residues 8–20 and 31–40; these read VREESRSEMKTEL and LTQEEKLQLR. At S12 the chain carries Phosphoserine. Residues 41–51 are compositionally biased toward basic residues; the sequence is KEKKQQKKKRK. A Phosphothreonine modification is found at T86. Basic and acidic residues predominate over residues 96–121; sequence SKAELRAERRAKQEAERALKQARKGE. The span at 130–140 shows a compositional bias: polar residues; the sequence is CPSTAGETTSG. The may bind the chemical integrated stress response (ISR) inhibitor ISRIB stretch occupies residues 171-180; the sequence is RKDYGSKVSL.

This sequence belongs to the eIF-2B alpha/beta/delta subunits family. Component of the translation initiation factor 2B (eIF2B) complex which is a heterodecamer of two sets of five different subunits: alpha, beta, gamma, delta and epsilon. Subunits alpha, beta and delta comprise a regulatory subcomplex and subunits epsilon and gamma comprise a catalytic subcomplex. Within the complex, the hexameric regulatory complex resides at the center, with the two heterodimeric catalytic subcomplexes bound on opposite sides.

It localises to the cytoplasm. The protein resides in the cytosol. Its activity is regulated as follows. Activated by the chemical integrated stress response (ISR) inhibitor ISRIB which stimulates guanine nucleotide exchange factor activity for both phosphorylated and unphosphorylated eIF2. Acts as a component of the translation initiation factor 2B (eIF2B) complex, which catalyzes the exchange of GDP for GTP on eukaryotic initiation factor 2 (eIF2) gamma subunit. Its guanine nucleotide exchange factor activity is repressed when bound to eIF2 complex phosphorylated on the alpha subunit, thereby limiting the amount of methionyl-initiator methionine tRNA available to the ribosome and consequently global translation is repressed. The chain is Translation initiation factor eIF2B subunit delta (Eif2b4) from Mus musculus (Mouse).